Reading from the N-terminus, the 67-residue chain is DNA-directed RNA polymerase subunit omega (67 aa).

Belongs to the RNA polymerase subunit omega family. The RNAP catalytic core consists of 2 alpha, 1 beta, 1 beta' and 1 omega subunit. When a sigma factor is associated with the core the holoenzyme is formed, which can initiate transcription.

The catalysed reaction is RNA(n) + a ribonucleoside 5'-triphosphate = RNA(n+1) + diphosphate. Promotes RNA polymerase assembly. Latches the N- and C-terminal regions of the beta' subunit thereby facilitating its interaction with the beta and alpha subunits. The chain is DNA-directed RNA polymerase subunit omega from Paraburkholderia phymatum (strain DSM 17167 / CIP 108236 / LMG 21445 / STM815) (Burkholderia phymatum).